A 101-amino-acid chain; its full sequence is uncharacterized protein (101 aa).

The chain crosses the membrane as a helical span at residues 17 to 37 (VIKILLISGISRIIILILAMF).

It localises to the endoplasmic reticulum membrane. This is an uncharacterized protein from Schizosaccharomyces pombe (strain 972 / ATCC 24843) (Fission yeast).